We begin with the raw amino-acid sequence, 297 residues long: uncharacterized protein (297 aa).

Belongs to the metallo-dependent hydrolases superfamily.

This is an uncharacterized protein from Sinorhizobium fredii (strain NBRC 101917 / NGR234).